The sequence spans 253 residues: DNA repair protein RecO (253 aa).

It belongs to the RecO family.

In terms of biological role, involved in DNA repair and RecF pathway recombination. The sequence is that of DNA repair protein RecO from Dehalococcoides mccartyi (strain CBDB1).